The primary structure comprises 468 residues: Aspartate ammonia-lyase (468 aa).

Thr99, Ser138, Thr139, Asn140, and Thr185 together coordinate L-aspartate. Positions Gly315–Asn324 are SS loop. Catalysis depends on Ser316, which acts as the Proton acceptor. Ser317 and Lys322 together coordinate L-aspartate.

The protein belongs to the class-II fumarase/aspartase family. Aspartase subfamily. As to quaternary structure, homotetramer.

The enzyme catalyses L-aspartate = fumarate + NH4(+). In terms of biological role, catalyzes the reversible conversion of L-aspartate to fumarate and ammonia. The sequence is that of Aspartate ammonia-lyase (aspA) from Helicobacter pylori (strain J99 / ATCC 700824) (Campylobacter pylori J99).